The sequence spans 291 residues: ATP synthase gamma chain (291 aa).

It belongs to the ATPase gamma chain family. As to quaternary structure, F-type ATPases have 2 components, CF(1) - the catalytic core - and CF(0) - the membrane proton channel. CF(1) has five subunits: alpha(3), beta(3), gamma(1), delta(1), epsilon(1). CF(0) has three main subunits: a, b and c.

It is found in the cell inner membrane. Functionally, produces ATP from ADP in the presence of a proton gradient across the membrane. The gamma chain is believed to be important in regulating ATPase activity and the flow of protons through the CF(0) complex. The chain is ATP synthase gamma chain from Neisseria meningitidis serogroup C (strain 053442).